Here is a 33-residue protein sequence, read N- to C-terminus: Protamine TP17 (33 aa).

Residues 1-33 are disordered; that stretch reads MPRRRRSSSRPVRRRRRPRVSRRRRRRGRRRRR.

In terms of tissue distribution, testis.

The protein resides in the nucleus. The protein localises to the chromosome. In terms of biological role, protamines substitute for histones in the chromatin of sperm during the haploid phase of spermatogenesis. They compact sperm DNA into a highly condensed, stable and inactive complex. This is Protamine TP17 from Oncorhynchus mykiss (Rainbow trout).